A 456-amino-acid polypeptide reads, in one-letter code: MSISDHPRVYGTVALTAAFAAGILVTLGFKDCYPELENRYQRRRNRNLSRSNGDYGVVVPTANRVHRESLIFGPVRLEDHEEVTSNINSSFDWVEGIEGCIGNTPLVMIRSLSEATGCVILAKAELLNGAGGSPKDRVALNMIQDAEERGLLVPGRGDTIYEGTVGSTGISLATLARAKGYKCHICMPNDMAIEKSQLLHHLGATVERVDPAPITSPDHFVNLARRRAREHEAVHADGSVGFFADQFESTANYQAHVKTTGPEIYRQTGGQLDAFVAGAGTGGTIAGVAKYLKEEKNLWETRVVLADPQGSGLFNKIRHGVMYSSTEREGTRRRQQVDTMVEGIGINRITENFESGRVLIDDAVRVTDEQACRMARWLVEHDGIFCGSSTAVNCVAAVVTAMKLPRGSRVVTLLCDSGNRHLSKFWKHIGDMGLENDTQAQAEDLFAELGLEELKR.

A helical membrane pass occupies residues 9-29 (VYGTVALTAAFAAGILVTLGF).

Belongs to the cysteine synthase/cystathionine beta-synthase family. It depends on pyridoxal 5'-phosphate as a cofactor.

The protein resides in the mitochondrion outer membrane. The catalysed reaction is O-acetyl-L-serine + hydrogen sulfide = L-cysteine + acetate. In terms of biological role, putative cysteine synthase that catalyzes the conversion of O-acetyl-L-serine (OAS) into cysteine, the last step in the cysteine biosynthesis pathway. However, in contrast to cysteine synthase cys-17, this CS-like protein may not function in cysteine biosynthesis. This is Cysteine synthase 2 from Neurospora crassa (strain ATCC 24698 / 74-OR23-1A / CBS 708.71 / DSM 1257 / FGSC 987).